The following is a 212-amino-acid chain: uncharacterized protein (212 aa).

The signal sequence occupies residues 1 to 18 (MQLTQVLAVAILAAGVSA). The disordered stretch occupies residues 108 to 180 (VSHNRVNAKQ…KDYGHKDYGH (73 aa)). The span at 117 to 180 (QRRDDKKDYG…KDYGHKDYGH (64 aa)) shows a compositional bias: basic and acidic residues. The segment at 120-210 (DDKKDYGKND…KDYGYKGYDD (91 aa)) is 15 X 5 AA tandem repeats of K-D-Y-G-H. Residues 123 to 127 (KDYGK) form repeat 1. A 2; truncated repeat occupies 128 to 132 (NDYGK). Tandem repeats lie at residues 133 to 137 (KDYGK), 138 to 142 (KDYGK), and 143 to 147 (KDYGK). The 6; truncated repeat unit spans residues 148 to 152 (KEYDP). 5 consecutive repeat copies span residues 166-170 (KDYGH), 171-175 (KDYGH), 176-180 (KDYGH), 181-185 (KDYGH), and 186-190 (KDYGH). Residues 191-195 (DDYGY) form a 12; truncated repeat. Residues 196-200 (KGYDD) form a 13; truncated repeat. A 14; truncated repeat occupies 201-205 (KDYGY). The 15; truncated repeat unit spans residues 206–210 (KGYDD).

The protein resides in the secreted. This is an uncharacterized protein from Arthroderma benhamiae (strain ATCC MYA-4681 / CBS 112371) (Trichophyton mentagrophytes).